The chain runs to 190 residues: Elongation factor P (190 aa).

This sequence belongs to the elongation factor P family.

The protein localises to the cytoplasm. It functions in the pathway protein biosynthesis; polypeptide chain elongation. Functionally, involved in peptide bond synthesis. Stimulates efficient translation and peptide-bond synthesis on native or reconstituted 70S ribosomes in vitro. Probably functions indirectly by altering the affinity of the ribosome for aminoacyl-tRNA, thus increasing their reactivity as acceptors for peptidyl transferase. In Amoebophilus asiaticus (strain 5a2), this protein is Elongation factor P.